The following is a 98-amino-acid chain: Alpha-elicitin capsicein (98 aa).

3 disulfides stabilise this stretch: Cys3-Cys71, Cys27-Cys56, and Cys51-Cys95.

Belongs to the elicitin family.

Its subcellular location is the secreted. Its function is as follows. Induces local and distal defense responses (incompatible hypersensitive reaction) in plants from the solanaceae and cruciferae families. Elicits leaf necrosis and causes the accumulation of pathogenesis-related proteins. Might interact with the lipidic molecules of the plasma membrane. The chain is Alpha-elicitin capsicein from Phytophthora capsici.